Reading from the N-terminus, the 204-residue chain is High frequency lysogenization protein HflD homolog (204 aa).

It belongs to the HflD family.

Its subcellular location is the cytoplasm. The protein resides in the cell inner membrane. The polypeptide is High frequency lysogenization protein HflD homolog (Xanthomonas axonopodis pv. citri (strain 306)).